The primary structure comprises 832 residues: Valine--tRNA ligase (832 aa).

The 'HIGH' region signature appears at 41–51; it reads PNVTGKLHLGH. The 'KMSKS' region motif lies at 512–516; the sequence is KMSKS. K515 contributes to the ATP binding site. The stretch at 760-831 forms a coiled coil; sequence FIEISQEQKQ…QIYLEELKWK (72 aa).

Belongs to the class-I aminoacyl-tRNA synthetase family. ValS type 1 subfamily. In terms of assembly, monomer.

Its subcellular location is the cytoplasm. It catalyses the reaction tRNA(Val) + L-valine + ATP = L-valyl-tRNA(Val) + AMP + diphosphate. Catalyzes the attachment of valine to tRNA(Val). As ValRS can inadvertently accommodate and process structurally similar amino acids such as threonine, to avoid such errors, it has a 'posttransfer' editing activity that hydrolyzes mischarged Thr-tRNA(Val) in a tRNA-dependent manner. This Mycoplasmopsis synoviae (strain 53) (Mycoplasma synoviae) protein is Valine--tRNA ligase.